Consider the following 138-residue polypeptide: Large ribosomal subunit protein uL16 (138 aa).

Positions 1–17 are enriched in basic residues; it reads MLIPRKVKHRKQHHPKQ. The interval 1-24 is disordered; sequence MLIPRKVKHRKQHHPKQRGIASGG.

This sequence belongs to the universal ribosomal protein uL16 family. As to quaternary structure, part of the 50S ribosomal subunit.

Functionally, binds 23S rRNA and is also seen to make contacts with the A and possibly P site tRNAs. The polypeptide is Large ribosomal subunit protein uL16 (Mycolicibacterium vanbaalenii (strain DSM 7251 / JCM 13017 / BCRC 16820 / KCTC 9966 / NRRL B-24157 / PYR-1) (Mycobacterium vanbaalenii)).